Reading from the N-terminus, the 320-residue chain is Epoxidase atD (320 aa).

N-linked (GlcNAc...) asparagine glycans are attached at residues asparagine 245 and asparagine 299.

It participates in secondary metabolite biosynthesis. Functionally, epoxidase; part of the gene cluster that mediates the biosynthesis of terreic acid, a quinone epoxide inhibitor of Bruton's tyrosine kinase. The first step of the pathway is the synthesis of 6-methylsalicylic acid (6-MSA) by the 6-methylsalicylic acid synthase atX. In the biosynthesis of 6-MSA, atX utilizes one acetyl-CoA and three malonyl-CoAs as its substrates and catalyzes a series of programmed reactions including Claisen condensation, reduction, aldol cyclization, and the hydrolytic cleavage that yields 6-MSA. The 6-methylsalicylate 1-monooxygenase atA then catalyzes the decarboxylative hydroxylation of 6-MSA to 3-methylcatechol. The next step is the conversion of 3-methylcatechol to 3-methyl-1,2,4-benzenetriol by cytochrome P450 monooxygenase atE, which is enhanced by cytochrome P450 monooxygenase atG. Then, the epoxidase atD catalyzes the epoxidation and hydroxyl oxidation of 3-methyl-1,2,4-benzenetriol to terremutin. Lastly, GMC oxidoreductase atC oxidizes terremutin to terreic acid. The sequence is that of Epoxidase atD from Aspergillus terreus (strain NIH 2624 / FGSC A1156).